We begin with the raw amino-acid sequence, 1588 residues long: Pentafunctional AROM polypeptide (1588 aa).

The tract at residues 1–392 is 3-dehydroquinate synthase; sequence MVQLAKVPIL…YGDSAQFVSD (392 aa). NAD(+)-binding positions include 43–45, 78–81, 109–111, and aspartate 114; these read DTN, ETSK, and GGV. A 7-phospho-2-dehydro-3-deoxy-D-arabino-heptonate-binding site is contributed by arginine 125. 134–135 provides a ligand contact to NAD(+); sequence TS. 2 residues coordinate 7-phospho-2-dehydro-3-deoxy-D-arabino-heptonate: aspartate 141 and lysine 147. Lysine 156 is an NAD(+) binding site. Asparagine 157 is a 7-phospho-2-dehydro-3-deoxy-D-arabino-heptonate binding site. NAD(+) is bound by residues 174–177 and asparagine 185; that span reads WLET. Glutamate 189 contacts Zn(2+). 7-phospho-2-dehydro-3-deoxy-D-arabino-heptonate is bound by residues 189–192 and lysine 258; that span reads EVIK. The active-site Proton acceptor; for 3-dehydroquinate synthase activity is the glutamate 268. Residues 272 to 276 and histidine 279 each bind 7-phospho-2-dehydro-3-deoxy-D-arabino-heptonate; that span reads RNLLN. Position 279 (histidine 279) interacts with Zn(2+). The active-site Proton acceptor; for 3-dehydroquinate synthase activity is the histidine 283. 7-phospho-2-dehydro-3-deoxy-D-arabino-heptonate is bound by residues histidine 295 and lysine 364. Residue histidine 295 coordinates Zn(2+). The EPSP synthase stretch occupies residues 405–871; sequence VYPFKDIPAD…WDVLHSELGA (467 aa). Cysteine 853 (for EPSP synthase activity) is an active-site residue. The shikimate kinase stretch occupies residues 890-1080; it reads SVVIIGMRAA…IPSGRSAFVC (191 aa). 895 to 902 lines the ATP pocket; it reads GMRAAGKT. Residues 1081–1293 are 3-dehydroquinase; sequence LTFDDLTEQT…AAPGQLTVAQ (213 aa). Histidine 1198 acts as the Proton acceptor; for 3-dehydroquinate dehydratase activity in catalysis. Lysine 1227 serves as the catalytic Schiff-base intermediate with substrate; for 3-dehydroquinate dehydratase activity. The tract at residues 1306–1588 is shikimate dehydrogenase; it reads PKELFVVGKP…KAIFDAVTKE (283 aa).

This sequence in the N-terminal section; belongs to the sugar phosphate cyclases superfamily. Dehydroquinate synthase family. In the 2nd section; belongs to the EPSP synthase family. The protein in the 3rd section; belongs to the shikimate kinase family. It in the 4th section; belongs to the type-I 3-dehydroquinase family. This sequence in the C-terminal section; belongs to the shikimate dehydrogenase family. In terms of assembly, homodimer. Requires Zn(2+) as cofactor.

The protein resides in the cytoplasm. The catalysed reaction is 7-phospho-2-dehydro-3-deoxy-D-arabino-heptonate = 3-dehydroquinate + phosphate. It carries out the reaction 3-dehydroquinate = 3-dehydroshikimate + H2O. It catalyses the reaction shikimate + NADP(+) = 3-dehydroshikimate + NADPH + H(+). The enzyme catalyses shikimate + ATP = 3-phosphoshikimate + ADP + H(+). The catalysed reaction is 3-phosphoshikimate + phosphoenolpyruvate = 5-O-(1-carboxyvinyl)-3-phosphoshikimate + phosphate. It functions in the pathway metabolic intermediate biosynthesis; chorismate biosynthesis; chorismate from D-erythrose 4-phosphate and phosphoenolpyruvate: step 2/7. Its pathway is metabolic intermediate biosynthesis; chorismate biosynthesis; chorismate from D-erythrose 4-phosphate and phosphoenolpyruvate: step 3/7. The protein operates within metabolic intermediate biosynthesis; chorismate biosynthesis; chorismate from D-erythrose 4-phosphate and phosphoenolpyruvate: step 4/7. It participates in metabolic intermediate biosynthesis; chorismate biosynthesis; chorismate from D-erythrose 4-phosphate and phosphoenolpyruvate: step 5/7. It functions in the pathway metabolic intermediate biosynthesis; chorismate biosynthesis; chorismate from D-erythrose 4-phosphate and phosphoenolpyruvate: step 6/7. Functionally, the AROM polypeptide catalyzes 5 consecutive enzymatic reactions in prechorismate polyaromatic amino acid biosynthesis. The polypeptide is Pentafunctional AROM polypeptide (Saccharomyces cerevisiae (strain Lalvin EC1118 / Prise de mousse) (Baker's yeast)).